The chain runs to 1161 residues: PAN2-PAN3 deadenylation complex catalytic subunit pan2 (1161 aa).

3 WD repeats span residues 20-59 (GLPT…RYTS), 102-145 (AHEE…DKLQ), and 276-315 (ANVS…HFNE). The linker stretch occupies residues 316 to 452 (MSKEVEFADV…GAKLNGEAED (137 aa)). A USP domain is found at 453 to 822 (DPLLKYSNVE…IPCVLAYQAR (370 aa)). One can recognise an Exonuclease domain in the interval 871–1049 (VALDTEFVDL…VEDARMALRL (179 aa)). Residues aspartate 874, glutamate 876, aspartate 983, and aspartate 1042 each contribute to the a divalent metal cation site. Residues 1094–1161 (GTAVTMQNNS…GDFFGGSPLK (68 aa)) are disordered. Residues 1097 to 1110 (VTMQNNSGRNTPST) show a composition bias toward polar residues. The span at 1116–1129 (AAAAAATTSAPATP) shows a compositional bias: low complexity. A compositionally biased stretch (gly residues) spans 1145 to 1155 (TFGGPGTGDFF).

The protein belongs to the peptidase C19 family. PAN2 subfamily. Forms a heterotrimer with an asymmetric homodimer of the regulatory subunit pan3 to form the poly(A)-nuclease (PAN) deadenylation complex. It depends on a divalent metal cation as a cofactor.

It localises to the cytoplasm. It catalyses the reaction Exonucleolytic cleavage of poly(A) to 5'-AMP.. With respect to regulation, positively regulated by the regulatory subunit pan3. Its function is as follows. Catalytic subunit of the poly(A)-nuclease (PAN) deadenylation complex, one of two cytoplasmic mRNA deadenylases involved in mRNA turnover. PAN specifically shortens poly(A) tails of RNA and the activity is stimulated by poly(A)-binding protein pab1. PAN deadenylation is followed by rapid degradation of the shortened mRNA tails by the CCR4-NOT complex. Deadenylated mRNAs are then degraded by two alternative mechanisms, namely exosome-mediated 3'-5' exonucleolytic degradation, or deadenylation-dependent mRNA decaping and subsequent 5'-3' exonucleolytic degradation by xrn1. May also be involved in post-transcriptional maturation of mRNA poly(A) tails. This chain is PAN2-PAN3 deadenylation complex catalytic subunit pan2, found in Aspergillus clavatus (strain ATCC 1007 / CBS 513.65 / DSM 816 / NCTC 3887 / NRRL 1 / QM 1276 / 107).